The following is a 306-amino-acid chain: Porphobilinogen deaminase (306 aa).

Residue cysteine 234 is modified to S-(dipyrrolylmethanemethyl)cysteine.

Belongs to the HMBS family. In terms of assembly, monomer. Dipyrromethane serves as cofactor.

The catalysed reaction is 4 porphobilinogen + H2O = hydroxymethylbilane + 4 NH4(+). It participates in porphyrin-containing compound metabolism; protoporphyrin-IX biosynthesis; coproporphyrinogen-III from 5-aminolevulinate: step 2/4. Functionally, tetrapolymerization of the monopyrrole PBG into the hydroxymethylbilane pre-uroporphyrinogen in several discrete steps. The polypeptide is Porphobilinogen deaminase (Mycobacteroides abscessus (strain ATCC 19977 / DSM 44196 / CCUG 20993 / CIP 104536 / JCM 13569 / NCTC 13031 / TMC 1543 / L948) (Mycobacterium abscessus)).